A 59-amino-acid polypeptide reads, in one-letter code: Photosystem II reaction center protein K (59 aa).

Residues 1–22 constitute a propeptide that is removed on maturation; it reads MLNIFSLICLNSALHSSSFFFA. A helical transmembrane segment spans residues 38 to 58; the sequence is MPVIPVLFFLLALVWQAAVSF.

The protein belongs to the PsbK family. PSII is composed of 1 copy each of membrane proteins PsbA, PsbB, PsbC, PsbD, PsbE, PsbF, PsbH, PsbI, PsbJ, PsbK, PsbL, PsbM, PsbT, PsbX, PsbY, PsbZ, Psb30/Ycf12, at least 3 peripheral proteins of the oxygen-evolving complex and a large number of cofactors. It forms dimeric complexes.

It is found in the plastid. The protein localises to the chloroplast thylakoid membrane. Functionally, one of the components of the core complex of photosystem II (PSII). PSII is a light-driven water:plastoquinone oxidoreductase that uses light energy to abstract electrons from H(2)O, generating O(2) and a proton gradient subsequently used for ATP formation. It consists of a core antenna complex that captures photons, and an electron transfer chain that converts photonic excitation into a charge separation. The sequence is that of Photosystem II reaction center protein K from Calycanthus floridus var. glaucus (Eastern sweetshrub).